The chain runs to 208 residues: Small ribosomal subunit protein uS5 (208 aa).

Basic and acidic residues predominate over residues 1–21 (MSDREQRDGGRSAENNNDRKG). The tract at residues 1 to 38 (MSDREQRDGGRSAENNNDRKGRNNGRRNDRRNHQDNER) is disordered. An S5 DRBM domain is found at 41–104 (YIERVVTINR…EEARKNFFRV (64 aa)).

This sequence belongs to the universal ribosomal protein uS5 family. Part of the 30S ribosomal subunit. Contacts proteins S4 and S8.

In terms of biological role, with S4 and S12 plays an important role in translational accuracy. Located at the back of the 30S subunit body where it stabilizes the conformation of the head with respect to the body. The chain is Small ribosomal subunit protein uS5 from Corynebacterium aurimucosum (strain ATCC 700975 / DSM 44827 / CIP 107346 / CN-1) (Corynebacterium nigricans).